Consider the following 503-residue polypeptide: Probable cytosol aminopeptidase (503 aa).

The Mn(2+) site is built by Lys270 and Asp275. Residue Lys282 is part of the active site. Asp293, Asp352, and Glu354 together coordinate Mn(2+). Residue Arg356 is part of the active site.

Belongs to the peptidase M17 family. It depends on Mn(2+) as a cofactor.

It localises to the cytoplasm. It catalyses the reaction Release of an N-terminal amino acid, Xaa-|-Yaa-, in which Xaa is preferably Leu, but may be other amino acids including Pro although not Arg or Lys, and Yaa may be Pro. Amino acid amides and methyl esters are also readily hydrolyzed, but rates on arylamides are exceedingly low.. It carries out the reaction Release of an N-terminal amino acid, preferentially leucine, but not glutamic or aspartic acids.. Presumably involved in the processing and regular turnover of intracellular proteins. Catalyzes the removal of unsubstituted N-terminal amino acids from various peptides. The chain is Probable cytosol aminopeptidase from Salmonella arizonae (strain ATCC BAA-731 / CDC346-86 / RSK2980).